The following is a 234-amino-acid chain: Thiamine-phosphate synthase (234 aa).

4-amino-2-methyl-5-(diphosphooxymethyl)pyrimidine is bound by residues 65–69 (QYRNK) and N97. Mg(2+) is bound by residues D98 and D117. Residue S136 participates in 4-amino-2-methyl-5-(diphosphooxymethyl)pyrimidine binding. 163–165 (SHT) contacts 2-[(2R,5Z)-2-carboxy-4-methylthiazol-5(2H)-ylidene]ethyl phosphate. K166 contributes to the 4-amino-2-methyl-5-(diphosphooxymethyl)pyrimidine binding site. Residues G192 and 212–213 (IS) contribute to the 2-[(2R,5Z)-2-carboxy-4-methylthiazol-5(2H)-ylidene]ethyl phosphate site.

It belongs to the thiamine-phosphate synthase family. Requires Mg(2+) as cofactor.

The catalysed reaction is 2-[(2R,5Z)-2-carboxy-4-methylthiazol-5(2H)-ylidene]ethyl phosphate + 4-amino-2-methyl-5-(diphosphooxymethyl)pyrimidine + 2 H(+) = thiamine phosphate + CO2 + diphosphate. It catalyses the reaction 2-(2-carboxy-4-methylthiazol-5-yl)ethyl phosphate + 4-amino-2-methyl-5-(diphosphooxymethyl)pyrimidine + 2 H(+) = thiamine phosphate + CO2 + diphosphate. The enzyme catalyses 4-methyl-5-(2-phosphooxyethyl)-thiazole + 4-amino-2-methyl-5-(diphosphooxymethyl)pyrimidine + H(+) = thiamine phosphate + diphosphate. Its pathway is cofactor biosynthesis; thiamine diphosphate biosynthesis; thiamine phosphate from 4-amino-2-methyl-5-diphosphomethylpyrimidine and 4-methyl-5-(2-phosphoethyl)-thiazole: step 1/1. In terms of biological role, condenses 4-methyl-5-(beta-hydroxyethyl)thiazole monophosphate (THZ-P) and 2-methyl-4-amino-5-hydroxymethyl pyrimidine pyrophosphate (HMP-PP) to form thiamine monophosphate (TMP). This Xylella fastidiosa (strain Temecula1 / ATCC 700964) protein is Thiamine-phosphate synthase.